The primary structure comprises 130 residues: MNIIEQIEKEEIARLTANKTIPAFAPGDTVIVNVNVVEGNRKRVQAYEGVVIAKRNRGLNSSFIVRKISSGEGVERTFQLYSPLIAGIEVKRRGDVRRAKLYYLRERSGKSARIKEKLVMKAKPAAVAAE.

It belongs to the bacterial ribosomal protein bL19 family.

Its function is as follows. This protein is located at the 30S-50S ribosomal subunit interface and may play a role in the structure and function of the aminoacyl-tRNA binding site. This is Large ribosomal subunit protein bL19 from Cupriavidus metallidurans (strain ATCC 43123 / DSM 2839 / NBRC 102507 / CH34) (Ralstonia metallidurans).